The following is a 349-amino-acid chain: Protein RecA (349 aa).

69-76 (GPESSGKT) lines the ATP pocket.

Belongs to the RecA family.

Its subcellular location is the cytoplasm. Can catalyze the hydrolysis of ATP in the presence of single-stranded DNA, the ATP-dependent uptake of single-stranded DNA by duplex DNA, and the ATP-dependent hybridization of homologous single-stranded DNAs. It interacts with LexA causing its activation and leading to its autocatalytic cleavage. The chain is Protein RecA from Crocosphaera subtropica (strain ATCC 51142 / BH68) (Cyanothece sp. (strain ATCC 51142)).